The following is a 387-amino-acid chain: Lipid-A-disaccharide synthase (387 aa).

This sequence belongs to the LpxB family.

The enzyme catalyses a lipid X + a UDP-2-N,3-O-bis[(3R)-3-hydroxyacyl]-alpha-D-glucosamine = a lipid A disaccharide + UDP + H(+). The protein operates within bacterial outer membrane biogenesis; LPS lipid A biosynthesis. In terms of biological role, condensation of UDP-2,3-diacylglucosamine and 2,3-diacylglucosamine-1-phosphate to form lipid A disaccharide, a precursor of lipid A, a phosphorylated glycolipid that anchors the lipopolysaccharide to the outer membrane of the cell. The chain is Lipid-A-disaccharide synthase from Nitrosococcus oceani (strain ATCC 19707 / BCRC 17464 / JCM 30415 / NCIMB 11848 / C-107).